A 345-amino-acid polypeptide reads, in one-letter code: Trace amine-associated receptor 6 (345 aa).

Residues 1–32 (MSSNSSLLVAVQLCYANVNGSCVKIPFSPGSR) lie on the Extracellular side of the membrane. N-linked (GlcNAc...) asparagine glycans are attached at residues asparagine 4 and asparagine 19. 2 disulfides stabilise this stretch: cysteine 22/cysteine 186 and cysteine 105/cysteine 190. The chain crosses the membrane as a helical span at residues 33 to 53 (VILYIVFGFGAVLAVFGNLLV). At 54-68 (MISILHFKQLHSPTN) the chain is on the cytoplasmic side. The chain crosses the membrane as a helical span at residues 69-89 (FLVASLACADFLVGVTVMPFS). The Extracellular segment spans residues 90–107 (MVRTVESCWYFGRSFCTF). Residues 108–128 (HTCCDVAFCYSSLFHLCFISI) traverse the membrane as a helical segment. Over 129 to 147 (DRYIAVTDPLVYPTKFTVS) the chain is Cytoplasmic. Residues 148 to 168 (VSGICISVSWILPLMYSGAVF) form a helical membrane-spanning segment. Residues 169-202 (YTGVYDDGLEELSDALNCIGGCQTVVNQNWVLTD) lie on the Extracellular side of the membrane. The chain crosses the membrane as a helical span at residues 203–223 (FLSFFIPTFIMIILYGNIFLV). At 224 to 259 (ARRQAKKIENTGSKTESSSESYKARVARRERKAAKT) the chain is on the cytoplasmic side. Residues 260–276 (LGVTVVAFMISWLPYSI) form a helical membrane-spanning segment. The Extracellular segment spans residues 277 to 282 (DSLIDA). A helical membrane pass occupies residues 283-302 (FMGFITPACIYEICCWCAYY). Residues 303–345 (NSAMNPLIYALFYPWFRKAIKVIVTGQVLKNSSATMNLFSEHI) lie on the Cytoplasmic side of the membrane.

It belongs to the G-protein coupled receptor 1 family. As to expression, expressed at low abundance in various brain tissues, as well as in fetal liver, but not in the cerebellum or placenta. In the brain, comparable levels of expression in basal ganglia, frontal cortex, substantia nigra, amygdala and hippocampus, highest expression in hippocampus and lowest expression in basal ganglia.

It is found in the cell membrane. Functionally, olfactory receptor specific for trace amines, such as beta-phenylethylamine (beta-PEA). Trace amine compounds are enriched in animal body fluids and act on trace amine-associated receptors (TAARs) to elicit both intraspecific and interspecific innate behaviors. Beta-PEA-binding causes a conformation change that triggers signaling via G(s)-class of G alpha proteins (GNAL or GNAS). The chain is Trace amine-associated receptor 6 from Homo sapiens (Human).